The following is a 234-amino-acid chain: ATP synthase subunit a 1 (234 aa).

5 helical membrane passes run 20–40 (ETVV…ILLT), 76–96 (LLPL…LGVI), 105–125 (DLSV…AYGV), 162–184 (LFGN…GFLA), and 195–215 (EALV…AGAM).

It belongs to the ATPase A chain family. F-type ATPases have 2 components, CF(1) - the catalytic core - and CF(0) - the membrane proton channel. CF(1) has five subunits: alpha(3), beta(3), gamma(1), delta(1), epsilon(1). CF(0) has three main subunits: a(1), b(2) and c(9-12). The alpha and beta chains form an alternating ring which encloses part of the gamma chain. CF(1) is attached to CF(0) by a central stalk formed by the gamma and epsilon chains, while a peripheral stalk is formed by the delta and b chains.

It localises to the cell inner membrane. Key component of the proton channel; it plays a direct role in the translocation of protons across the membrane. The polypeptide is ATP synthase subunit a 1 (Hahella chejuensis (strain KCTC 2396)).